The chain runs to 184 residues: CASP-like protein 1U1 (184 aa).

The Cytoplasmic segment spans residues 1-30 (MSSTGTTLSASEGDKGFRNGAAPAKSKSHS). A helical membrane pass occupies residues 31-51 (TIALLRLLAFAATLSAFVTMI). Residues 52–76 (TNKQKITIGPFTRWSKWHYSDAFMW) lie on the Extracellular side of the membrane. Residues 77–97 (FVVANCIAFIYLLFAAILGLI) form a helical membrane-spanning segment. Topologically, residues 98–111 (SHSPMLVKHLVILD) are cytoplasmic. Residues 112 to 132 (LIVSYMLFSAASAATAVAYIG) form a helical membrane-spanning segment. The Extracellular segment spans residues 133 to 154 (KNGISQPGWTAICGVFERYCHH). A helical transmembrane segment spans residues 155–175 (VAGALVACFLGWLFLTIAVFL). The Cytoplasmic portion of the chain corresponds to 176 to 184 (GMRRSPAAV).

It belongs to the Casparian strip membrane proteins (CASP) family. Homodimer and heterodimers.

Its subcellular location is the cell membrane. This is CASP-like protein 1U1 from Marchantia polymorpha (Common liverwort).